A 491-amino-acid polypeptide reads, in one-letter code: Aspartyl/glutamyl-tRNA(Asn/Gln) amidotransferase subunit B (491 aa).

Belongs to the GatB/GatE family. GatB subfamily. In terms of assembly, heterotrimer of A, B and C subunits.

The enzyme catalyses L-glutamyl-tRNA(Gln) + L-glutamine + ATP + H2O = L-glutaminyl-tRNA(Gln) + L-glutamate + ADP + phosphate + H(+). The catalysed reaction is L-aspartyl-tRNA(Asn) + L-glutamine + ATP + H2O = L-asparaginyl-tRNA(Asn) + L-glutamate + ADP + phosphate + 2 H(+). Its function is as follows. Allows the formation of correctly charged Asn-tRNA(Asn) or Gln-tRNA(Gln) through the transamidation of misacylated Asp-tRNA(Asn) or Glu-tRNA(Gln) in organisms which lack either or both of asparaginyl-tRNA or glutaminyl-tRNA synthetases. The reaction takes place in the presence of glutamine and ATP through an activated phospho-Asp-tRNA(Asn) or phospho-Glu-tRNA(Gln). In Paraburkholderia xenovorans (strain LB400), this protein is Aspartyl/glutamyl-tRNA(Asn/Gln) amidotransferase subunit B.